The chain runs to 62 residues: Inner membrane protein p12 (62 aa).

The helical transmembrane segment at 16 to 36 (LLIVAIIVVIMAIMLYYFWWM) threads the bilayer.

This sequence belongs to the asfivirus inner membrane protein p12 family. In terms of assembly, homomultimer; disulfide-linked. Post-translationally, not glycosylated.

It is found in the virion membrane. This is Inner membrane protein p12 from African swine fever virus (isolate Tick/Malawi/Lil 20-1/1983) (ASFV).